A 260-amino-acid polypeptide reads, in one-letter code: Snake venom serine protease homolog 2A (260 aa).

The N-terminal stretch at 1–18 (MVLIRVLANLLILQLSYA) is a signal peptide. A propeptide spanning residues 19-24 (QKSSEL) is cleaved from the precursor. The Peptidase S1 domain maps to 25 to 251 (IIGGDECNIN…HLDWIKSIIA (227 aa)). 6 cysteine pairs are disulfide-bonded: Cys31–Cys165, Cys52–Cys68, Cys100–Cys258, Cys144–Cys212, Cys176–Cys191, and Cys202–Cys227. Residues Asn83, Asn123, and Asn124 are each glycosylated (N-linked (GlcNAc...) asparagine).

This sequence belongs to the peptidase S1 family. Snake venom subfamily. Expressed by the venom gland.

It is found in the secreted. Snake venom serine protease homolog that may act in the hemostasis system of the prey. The protein is Snake venom serine protease homolog 2A (TLG2A) of Craspedocephalus gramineus (Bamboo pit viper).